The primary structure comprises 509 residues: ATP synthase subunit alpha (509 aa).

Residue 169-176 (GDRQTGKT) coordinates ATP.

This sequence belongs to the ATPase alpha/beta chains family. F-type ATPases have 2 components, CF(1) - the catalytic core - and CF(0) - the membrane proton channel. CF(1) has five subunits: alpha(3), beta(3), gamma(1), delta(1), epsilon(1). CF(0) has three main subunits: a(1), b(2) and c(9-12). The alpha and beta chains form an alternating ring which encloses part of the gamma chain. CF(1) is attached to CF(0) by a central stalk formed by the gamma and epsilon chains, while a peripheral stalk is formed by the delta and b chains.

It localises to the cell inner membrane. It carries out the reaction ATP + H2O + 4 H(+)(in) = ADP + phosphate + 5 H(+)(out). Its function is as follows. Produces ATP from ADP in the presence of a proton gradient across the membrane. The alpha chain is a regulatory subunit. The polypeptide is ATP synthase subunit alpha (Rhizobium leguminosarum bv. trifolii (strain WSM2304)).